We begin with the raw amino-acid sequence, 99 residues long: MGLFMIIAILLFQKPTVTEQLKKCWNNYVQGHCRKICRVNEVPEALCENGRYCCLNIKELEACKKITKPSHPKPATLALTLQDYVTIIENFPSLKTQST.

The first 20 residues, 1–20 (MGLFMIIAILLFQKPTVTEQ), serve as a signal peptide directing secretion. 3 disulfides stabilise this stretch: cysteine 24–cysteine 53, cysteine 33–cysteine 47, and cysteine 37–cysteine 54. Positions 66–99 (ITKPSHPKPATLALTLQDYVTIIENFPSLKTQST) are excised as a propeptide.

The protein belongs to the beta-defensin family.

Its subcellular location is the secreted. Has antibacterial activity. The polypeptide is Beta-defensin 127 (DEFB127) (Pan troglodytes (Chimpanzee)).